A 1405-amino-acid polypeptide reads, in one-letter code: DNA-directed RNA polymerase subunit beta' (1405 aa).

Zn(2+) is bound by residues Cys70, Cys72, Cys85, and Cys88. Mg(2+)-binding residues include Asp460, Asp462, and Asp464. Cys815, Cys889, Cys896, and Cys899 together coordinate Zn(2+). A disordered region spans residues 1363–1388 (LAHHAERRRRREDPESTANPSAFDVE).

Belongs to the RNA polymerase beta' chain family. As to quaternary structure, the RNAP catalytic core consists of 2 alpha, 1 beta, 1 beta' and 1 omega subunit. When a sigma factor is associated with the core the holoenzyme is formed, which can initiate transcription. Mg(2+) serves as cofactor. Zn(2+) is required as a cofactor.

The catalysed reaction is RNA(n) + a ribonucleoside 5'-triphosphate = RNA(n+1) + diphosphate. DNA-dependent RNA polymerase catalyzes the transcription of DNA into RNA using the four ribonucleoside triphosphates as substrates. This is DNA-directed RNA polymerase subunit beta' from Chromohalobacter salexigens (strain ATCC BAA-138 / DSM 3043 / CIP 106854 / NCIMB 13768 / 1H11).